We begin with the raw amino-acid sequence, 449 residues long: Methionine aminopeptidase 2-2 (449 aa).

The segment at 1-91 is disordered; that stretch reads MAAQAAPELA…PRIPLTTLFP (91 aa). The segment covering 15-28 has biased composition (polar residues); it reads NKNTGSAEASTVPA. Residues 34-50 are compositionally biased toward acidic residues; it reads DDAENEGDSDDDRDDEQ. Residues 61 to 75 are compositionally biased toward basic residues; it reads KKKKKKRPKKKKKTA. Position 199 (His-199) interacts with substrate. Positions 219, 230, and 299 each coordinate a divalent metal cation. His-307 provides a ligand contact to substrate. The a divalent metal cation site is built by Glu-335 and Glu-430.

This sequence belongs to the peptidase M24A family. Methionine aminopeptidase eukaryotic type 2 subfamily. Co(2+) is required as a cofactor. Zn(2+) serves as cofactor. It depends on Mn(2+) as a cofactor. The cofactor is Fe(2+).

Its subcellular location is the cytoplasm. It carries out the reaction Release of N-terminal amino acids, preferentially methionine, from peptides and arylamides.. Its function is as follows. Cotranslationally removes the N-terminal methionine from nascent proteins. The N-terminal methionine is often cleaved when the second residue in the primary sequence is small and uncharged (Met-Ala-, Cys, Gly, Pro, Ser, Thr, or Val). The chain is Methionine aminopeptidase 2-2 from Arthroderma gypseum (strain ATCC MYA-4604 / CBS 118893) (Microsporum gypseum).